We begin with the raw amino-acid sequence, 473 residues long: Glutathione reductase, mitochondrial (473 aa).

Positions 30 and 31 each coordinate FAD. S30 lines the glutathione pocket. R37 lines the glutathione pocket. Positions 50, 57, 58, and 66 each coordinate FAD. C58 and C63 are joined by a disulfide. Y114 is a glutathione binding site. Residue A130 coordinates FAD. Residues A190, I193, E196, R213, R219, and G279 each coordinate NADP(+). D320 is a binding site for FAD. L326 contributes to the NADP(+) binding site. T328 serves as a coordination point for FAD. Residue R336 coordinates glutathione. V359 is a binding site for NADP(+). FAD is bound at residue H456. The active-site Proton acceptor is H456.

This sequence belongs to the class-I pyridine nucleotide-disulfide oxidoreductase family. Requires FAD as cofactor. In terms of tissue distribution, expressed at all larval stages and in adults in intestine, vulva muscle, pharynx and some cells in the tail.

The protein resides in the cytoplasm. The protein localises to the mitochondrion. It carries out the reaction 2 glutathione + NADP(+) = glutathione disulfide + NADPH + H(+). In terms of biological role, catalyzes the reduction of glutathione disulfide (GSSG) to reduced glutathione (GSH). Constitutes the major mechanism to maintain a high GSH:GSSG ratio in the cytosol. Involved in resistance to oxidative stress and starvation. Together with thioredoxin reductase txtr-1, required for the reduction of disulfide groups in the cuticle during molting. The sequence is that of Glutathione reductase, mitochondrial from Caenorhabditis elegans.